Consider the following 307-residue polypeptide: Glutathione synthetase (307 aa).

An ATP-grasp domain is found at 120-304 (KLGALRYSHL…VSDKVIEKLL (185 aa)). Residue 146 to 202 (AQINHDVVVKPLGGKGGQGVIRLTKDSPGIKAMIELITSQEQLPVMMQKFIPEVKEG) participates in ATP binding. Residues Glu275 and Asn277 each coordinate Mg(2+).

It belongs to the prokaryotic GSH synthase family. Mg(2+) is required as a cofactor. The cofactor is Mn(2+).

The enzyme catalyses gamma-L-glutamyl-L-cysteine + glycine + ATP = glutathione + ADP + phosphate + H(+). It functions in the pathway sulfur metabolism; glutathione biosynthesis; glutathione from L-cysteine and L-glutamate: step 2/2. The polypeptide is Glutathione synthetase (Prochlorococcus marinus subsp. pastoris (strain CCMP1986 / NIES-2087 / MED4)).